The primary structure comprises 218 residues: Adenylate kinase (218 aa).

10 to 15 (GAGKGT) is a binding site for ATP. Positions 30–59 (STGDMLRAAVKAQSELGMAAKKVMDEGGLV) are NMP. Residues threonine 31, arginine 36, 57–59 (GLV), 85–88 (GFPR), and glutamine 92 contribute to the AMP site. Residues 122-159 (GRRVHPASGRTYHIVFNPPAVEGKDDVTGEDLVQRDDD) form an LID region. Residues arginine 123 and 132 to 133 (TY) contribute to the ATP site. Arginine 156 and arginine 167 together coordinate AMP. Glycine 203 serves as a coordination point for ATP.

This sequence belongs to the adenylate kinase family. In terms of assembly, monomer.

The protein resides in the cytoplasm. It catalyses the reaction AMP + ATP = 2 ADP. The protein operates within purine metabolism; AMP biosynthesis via salvage pathway; AMP from ADP: step 1/1. Its function is as follows. Catalyzes the reversible transfer of the terminal phosphate group between ATP and AMP. Plays an important role in cellular energy homeostasis and in adenine nucleotide metabolism. This chain is Adenylate kinase, found in Chlorobaculum parvum (strain DSM 263 / NCIMB 8327) (Chlorobium vibrioforme subsp. thiosulfatophilum).